The sequence spans 462 residues: Argininosuccinate lyase (462 aa).

This sequence belongs to the lyase 1 family. Argininosuccinate lyase subfamily.

The protein resides in the cytoplasm. The enzyme catalyses 2-(N(omega)-L-arginino)succinate = fumarate + L-arginine. It functions in the pathway amino-acid biosynthesis; L-arginine biosynthesis; L-arginine from L-ornithine and carbamoyl phosphate: step 3/3. The polypeptide is Argininosuccinate lyase (Ehrlichia ruminantium (strain Welgevonden)).